Consider the following 474-residue polypeptide: MNSPSESRVPSSLTQDPSFTASPALLQGIWNSTQNISVRVQLLSVSPTTPGLQAAAWVPFPTVDVPDHAHYTLGTVILLVGLTGMLGNLTVIYTFCRNRGLRTPANMLIINLAVSDFLMSFTQAPVFFASSLYKKWLFGETGCKFYAFCGAVFGIVSMITLTAIAMDRYLVITRPLATIGMRSKRRTALVLLGVWLYALAWSLPPFFGWSAYVPEGLLTSCSWDYVTFTPLVRAYTMLLFCFVFFLPLLIIIFCYIFIFRAIRETGRACEGCGESPLRRRQWQRLQSEWKMAKVALIVILLFVLSWAPYSTVALVGFAGYSHILTPYMSSVPAVIAKASAIHNPIIYAITHPKYRAAIAQHLPCLGVLLGVSGQRSHPSLSYRSTHRSTLSSQSSDLSWISGQKRQESLGSESEVGWTDTETTAAWGAAQQASGQSFCSHDLEDGEVKAPSSPQEQKSKTPKTKRHLPSLDRRM.

Residues M1–T72 are Extracellular-facing. N31 and N35 each carry an N-linked (GlcNAc...) asparagine glycan. Residues L73–Y93 traverse the membrane as a helical segment. At T94–M107 the chain is on the cytoplasmic side. Residues L108–F128 form a helical membrane-spanning segment. The Extracellular segment spans residues A129–K144. C143 and C221 are joined by a disulfide. The chain crosses the membrane as a helical span at residues F145 to A165. Residues M166–A188 lie on the Cytoplasmic side of the membrane. A helical membrane pass occupies residues L189–W209. At S210–L238 the chain is on the extracellular side. The helical transmembrane segment at L239–F259 threads the bilayer. The Cytoplasmic segment spans residues R260 to K293. The helical transmembrane segment at V294 to L314 threads the bilayer. The Extracellular portion of the chain corresponds to V315–R355. Residue K337 is modified to N6-(retinylidene)lysine. Residues A356–S372 form a helical membrane-spanning segment. Residues G373–M474 are Cytoplasmic-facing. Residues A428–M474 form a disordered region.

This sequence belongs to the G-protein coupled receptor 1 family. Opsin subfamily. In terms of tissue distribution, eye; expressed in a photosensitive subset of retinal ganglion cells (at protein level).

It localises to the cell membrane. The protein localises to the cell projection. Its subcellular location is the axon. It is found in the dendrite. The protein resides in the perikaryon. Its function is as follows. Photoreceptor that binds cis-retinaldehydes. Contributes to pupillar reflex, photoentrainment and other non-image forming responses to light. May be involved in the optokinetic visual tracking response. May be involved in the regulation of retinal hyaloid vessel growth and regression. The protein is Melanopsin of Rattus norvegicus (Rat).